Here is a 380-residue protein sequence, read N- to C-terminus: DNA replication and repair protein RecF (380 aa).

ATP is bound at residue 30–37 (GPNGFGKT).

The protein belongs to the RecF family.

It is found in the cytoplasm. In terms of biological role, the RecF protein is involved in DNA metabolism; it is required for DNA replication and normal SOS inducibility. RecF binds preferentially to single-stranded, linear DNA. It also seems to bind ATP. The chain is DNA replication and repair protein RecF from Mycobacterium sp. (strain KMS).